Here is a 304-residue protein sequence, read N- to C-terminus: Ribonuclease BN (304 aa).

Zn(2+) contacts are provided by His63, His65, Asp67, His68, His140, Asp211, and His269. Asp67 (proton acceptor) is an active-site residue.

It belongs to the RNase Z family. RNase BN subfamily. As to quaternary structure, homodimer. Zn(2+) is required as a cofactor.

Its function is as follows. Zinc phosphodiesterase, which has both exoribonuclease and endoribonuclease activities. This chain is Ribonuclease BN, found in Cronobacter sakazakii (strain ATCC BAA-894) (Enterobacter sakazakii).